The primary structure comprises 130 residues: Con-Ins M1 (130 aa).

A signal peptide spans 1–21; it reads MTTSSYFLLVALGLLLYVCQS. Cystine bridges form between Cys29–Cys107, Cys41–Cys110, Cys53–Cys123, and Cys109–Cys114. At Pro34 the chain carries 4-hydroxyproline; partial. A propeptide spans 59–92 (c peptide); the sequence is AHGGTNDARATTGRALSLSKRRGFLSMLKRRGKR. At Glu118 the chain carries 4-carboxyglutamate; partial. Position 129 is a serine amide (Ser129).

The protein belongs to the insulin family. Heterodimer of A and B chains; disulfide-linked. In terms of tissue distribution, expressed by the venom gland.

It localises to the secreted. Functionally, this venom insulin facilitates prey capture by rapidly inducing hypoglycemic shock. Intraperitoneal injection of this peptide into zebrafish lowers blood glucose with the same potency than human insulin. In vivo, when applied to water, this peptide reduces overall locomotor activity of zebrafish larvae, observed as a significant decrease in the percentage of time spent swimming and movement frequency. This Conus marmoreus (Marble cone) protein is Con-Ins M1.